Here is a 245-residue protein sequence, read N- to C-terminus: Biosynthetic peptidoglycan transglycosylase (245 aa).

A helical transmembrane segment spans residues 20–42; it reads VYAGSVFAGAWLATQLFYLAQIA.

The protein belongs to the glycosyltransferase 51 family.

The protein localises to the cell inner membrane. It carries out the reaction [GlcNAc-(1-&gt;4)-Mur2Ac(oyl-L-Ala-gamma-D-Glu-L-Lys-D-Ala-D-Ala)](n)-di-trans,octa-cis-undecaprenyl diphosphate + beta-D-GlcNAc-(1-&gt;4)-Mur2Ac(oyl-L-Ala-gamma-D-Glu-L-Lys-D-Ala-D-Ala)-di-trans,octa-cis-undecaprenyl diphosphate = [GlcNAc-(1-&gt;4)-Mur2Ac(oyl-L-Ala-gamma-D-Glu-L-Lys-D-Ala-D-Ala)](n+1)-di-trans,octa-cis-undecaprenyl diphosphate + di-trans,octa-cis-undecaprenyl diphosphate + H(+). It functions in the pathway cell wall biogenesis; peptidoglycan biosynthesis. In terms of biological role, peptidoglycan polymerase that catalyzes glycan chain elongation from lipid-linked precursors. This is Biosynthetic peptidoglycan transglycosylase from Burkholderia orbicola (strain MC0-3).